A 225-amino-acid chain; its full sequence is PKHD-type hydroxylase YbiX (225 aa).

One can recognise a Fe2OG dioxygenase domain in the interval 78 to 177; sequence TLSTPLFNRY…RVASFMWIQS (100 aa). H96, D98, and H158 together coordinate Fe cation. R168 serves as a coordination point for 2-oxoglutarate.

Requires Fe(2+) as cofactor. L-ascorbate serves as cofactor.

This Escherichia coli O17:K52:H18 (strain UMN026 / ExPEC) protein is PKHD-type hydroxylase YbiX.